The sequence spans 334 residues: Phosphoribosylformylglycinamidine cyclo-ligase (334 aa).

Belongs to the AIR synthase family.

It localises to the cytoplasm. The enzyme catalyses 2-formamido-N(1)-(5-O-phospho-beta-D-ribosyl)acetamidine + ATP = 5-amino-1-(5-phospho-beta-D-ribosyl)imidazole + ADP + phosphate + H(+). Its pathway is purine metabolism; IMP biosynthesis via de novo pathway; 5-amino-1-(5-phospho-D-ribosyl)imidazole from N(2)-formyl-N(1)-(5-phospho-D-ribosyl)glycinamide: step 2/2. This is Phosphoribosylformylglycinamidine cyclo-ligase from Pyrococcus furiosus (strain ATCC 43587 / DSM 3638 / JCM 8422 / Vc1).